The primary structure comprises 1544 residues: Lysine-specific demethylase 5B (1544 aa).

Residues 1–14 (MEPATTLPPGPRPA) are compositionally biased toward pro residues. Positions 1–22 (MEPATTLPPGPRPALPLGGPGP) are disordered. The region spanning 32-73 (CPVFEPSWEEFADPFAFIHKIRPIAEQTGICKVRPPPDWQPP) is the JmjN domain. The ARID domain maps to 97-187 (TRVKLNFLDQ…ILNPYNLFLS (91 aa)). Glycyl lysine isopeptide (Lys-Gly) (interchain with G-Cter in SUMO2) cross-links involve residues K148, K204, K209, K242, K274, and K278. Residues 200-228 (TSDTKDKEYKPHDIPQRQSVQPAETCPPA) are disordered. The span at 202–214 (DTKDKEYKPHDIP) shows a compositional bias: basic and acidic residues. The disordered stretch occupies residues 269–297 (NEKEMKSTIKQEPTEKKDCELESEKEKPK). Residues 309 to 359 (LYVCLLCGSGNDEDRLLLCDGCDDSYHTFCLVPPLHDVPKGDWRCPKCLAQ) form a PHD-type 1 zinc finger. Y425 provides a ligand contact to 2-oxoglutarate. A JmjC domain is found at 453-619 (EYLDSGWNLN…LGRQCVEHYR (167 aa)). Fe cation-binding residues include H499 and E501. Residues S507, N509, and K517 each contribute to the 2-oxoglutarate site. H587 is a Fe cation binding site. Residues 692-744 (CIKCKTTCFMSAISCSCKPGLLVCLHHVKELCSCPPYKYNLRYRYTLDDLYPM) form a C5HC2 zinc finger. K769 participates in a covalent cross-link: Glycyl lysine isopeptide (Lys-Gly) (interchain with G-Cter in SUMO2). Position 832 is an N6-acetyllysine (K832). S986 bears the Phosphoserine mark. The segment at 1176–1224 (MKVCLCQKTPATPMIQCELCRDAFHTSCVAAPSISQSSRIWLCPHCRRS) adopts a PHD-type 2 zinc-finger fold. The segment covering 1297 to 1314 (QASATDKVSQPPGTTSFS) has biased composition (polar residues). Residues 1297-1318 (QASATDKVSQPPGTTSFSLPDD) form a disordered region. Residue S1328 is modified to Phosphoserine. Over residues 1374 to 1388 (PSSVQQADRSSPVRS) the composition is skewed to polar residues. Positions 1374–1447 (PSSVQQADRS…IKLSHPKDMD (74 aa)) are disordered. Residues 1389–1427 (SSEKNDCLRGKRDAINSPERKLKRRPEREGLPSERWDRV) show a composition bias toward basic and acidic residues. Positions 1428-1441 (KHMRTPQKKKIKLS) are enriched in basic residues. K1450 is covalently cross-linked (Glycyl lysine isopeptide (Lys-Gly) (interchain with G-Cter in SUMO2)). S1456 is modified (phosphoserine). A PHD-type 3 zinc finger spans residues 1484 to 1538 (DAICPAVSCLQPEGDEVDWVQCDGSCNQWFHQVCVGVSPEMAEKEDYICVRCTGK).

This sequence belongs to the JARID1 histone demethylase family. Interacts with FOXG1B, PAX9, MYC, MYCN and RB1. Interacts with HDAC1, HDAC4, HDAC5 and HDAC7. Interacts (via PHD-type 1 zinc finger) with histone H3 unmodified at 'Lys-4'; the interaction is inhibited when histone H3 is methylated at 'Arg-2' or 'Lys-4'. The cofactor is Fe(2+). Present at highest levels in testis, where it is enriched in spermatogonia and pachytene cells (at protein level).

The protein resides in the nucleus. It catalyses the reaction N(6),N(6),N(6)-trimethyl-L-lysyl(4)-[histone H3] + 3 2-oxoglutarate + 3 O2 = L-lysyl(4)-[histone H3] + 3 formaldehyde + 3 succinate + 3 CO2. In terms of biological role, histone demethylase that demethylates 'Lys-4' of histone H3, thereby playing a central role in histone code. Does not demethylate histone H3 'Lys-9' or H3 'Lys-27'. Demethylates trimethylated, dimethylated and monomethylated H3 'Lys-4'. Acts as a transcriptional corepressor for FOXG1B and PAX9. Represses the CLOCK-BMAL1 heterodimer-mediated transcriptional activation of the core clock component PER2. The protein is Lysine-specific demethylase 5B (Kdm5b) of Mus musculus (Mouse).